The sequence spans 122 residues: Large ribosomal subunit protein uL14 (122 aa).

It belongs to the universal ribosomal protein uL14 family. Part of the 50S ribosomal subunit. Forms a cluster with proteins L3 and L19. In the 70S ribosome, L14 and L19 interact and together make contacts with the 16S rRNA in bridges B5 and B8.

Binds to 23S rRNA. Forms part of two intersubunit bridges in the 70S ribosome. The polypeptide is Large ribosomal subunit protein uL14 (Caulobacter sp. (strain K31)).